We begin with the raw amino-acid sequence, 100 residues long: UPF0213 protein YhbQ (100 aa).

A GIY-YIG domain is found at 2-77 (TPWFLYLIRT…KQLTKRQKER (76 aa)).

This sequence belongs to the UPF0213 family.

This chain is UPF0213 protein YhbQ, found in Shigella dysenteriae serotype 1 (strain Sd197).